Consider the following 495-residue polypeptide: Cornulin (495 aa).

Residues 49–84 form the EF-hand domain; sequence HDPATVDEVLRLLDEDHTGTVEFKEFLVLVFKVAQA. Residues Asp62, Asp64, Thr66, Thr68, and Glu73 each contribute to the Ca(2+) site. Disordered regions lie at residues 96–439 and 460–481; these read ACGS…TVVG and LHTSVSSAQGQDAAQSEEKRGI. A compositionally biased stretch (polar residues) spans 99-110; sequence SQESGSLHSGAS. Residues 137–151 are compositionally biased toward low complexity; the sequence is HRQSQQGSRGQNRPG. Positions 152–194 are enriched in polar residues; that stretch reads VQTQGQATGSAWVSSYDRQAESQSQERISPQIQLSGQTEQTQK. Positions 196 to 222 are enriched in basic and acidic residues; sequence GEGKRNQTTEMRPERQPQTREQDRAHQ. Residues 226–242 show a composition bias toward low complexity; the sequence is TVTGSGTQTQAGATQTV. Polar residues-rich tracts occupy residues 243–282 and 290–303; these read EQDSSHQTGRTSKQTQEATNDQNRGTETHGQGRSQTSQAV and QAGTHTQTPTQTVE. Residues 307-324 are compositionally biased toward low complexity; it reads SHQTGSTSTQTQESTNGQ. Polar residues predominate over residues 334 to 355; sequence GRSQTSQAVTGGHTQIQAGSHT. The span at 374–385 shows a compositional bias: low complexity; that stretch reads QGQTQTQPGSGQ. Polar residues-rich tracts occupy residues 403–420 and 460–473; these read QAQTGASTESGRQEWSST and LHTSVSSAQGQDAA.

Belongs to the S100-fused protein family. Homodimer. Expressed in the basal skin layer (at protein level). Squamous epithelia cell-specific. Expressed in the esophagus (periphery of the cells of the granular and the upper spinous layers), foreskin (granular and lower cornified cells), scalp skin (granular layer), inner root sheath of the hair follicle and in primary keratinocytes (at protein level). Expressed in the squamous epithelium of the cervix, esophagus, foreskin and larynx. Expressed in the fetal bladder and scalp skin. Expressed at very low levels in the lung, kidney, uterus, skeletal muscle, heart and fetal brain. Undetectable or barely detectable in esophageal and oral squamous cell carcinoma compared with the matched adjacent normal esophageal mucosa. Undetectable or barely detectable in larynx and esophagus from patients with pH-documented laryngopharyngeal reflux (LPR).

The protein localises to the cytoplasm. In terms of biological role, promotes cell proliferation, G1/S cell cycle progression and induces expression of the cell cycle regulator CCND1. Regulates proliferation induced by pro-inflammatory cytokine response via activation of NFKB1 and PI3K/AKT signaling pathways. In Homo sapiens (Human), this protein is Cornulin (CRNN).